A 276-amino-acid chain; its full sequence is tRNA (guanine-N(7)-)-methyltransferase (276 aa).

The segment at 1–23 (MRPDPAPLDPTDASPAQARRHQP) is disordered. 4 residues coordinate S-adenosyl-L-methionine: E103, E128, D155, and D178. Residue D178 is part of the active site. Residues K182, D214, and 252-255 (TRYE) contribute to the substrate site.

It belongs to the class I-like SAM-binding methyltransferase superfamily. TrmB family.

It carries out the reaction guanosine(46) in tRNA + S-adenosyl-L-methionine = N(7)-methylguanosine(46) in tRNA + S-adenosyl-L-homocysteine. It participates in tRNA modification; N(7)-methylguanine-tRNA biosynthesis. In terms of biological role, catalyzes the formation of N(7)-methylguanine at position 46 (m7G46) in tRNA. In Cutibacterium acnes (strain DSM 16379 / KPA171202) (Propionibacterium acnes), this protein is tRNA (guanine-N(7)-)-methyltransferase.